The following is a 988-amino-acid chain: DNA polymerase (988 aa).

Belongs to the DNA polymerase type-B family. As to quaternary structure, interacts with A20. Component of the Uracil-DNA glycosylase(UDG)-A20-polymerase complex; A20 and UDG form a heterodimeric processivity factor that associates with E9 to form the processive polymerase holoenzyme.

The enzyme catalyses DNA(n) + a 2'-deoxyribonucleoside 5'-triphosphate = DNA(n+1) + diphosphate. Catalyzes DNA synthesis. Acquires processivity by associating with a heterodimeric processivity factor comprised of the viral A20 and D4 proteins, thereby forming the DNA polymerase holoenzyme. Displays 3'- to 5' exonuclease activity. Might participate in viral DNA recombination. Does not perform translesion synthesis across an abasic site. The chain is DNA polymerase (POL) from Vertebrata (FPV).